A 154-amino-acid polypeptide reads, in one-letter code: Ribonuclease 1 (154 aa).

Belongs to the BetVI family.

It is found in the cytoplasm. Functionally, catalyzes the two-stage endonucleolytic cleavage to 3'-phosphomononucleotides and 3'-phosphooligonucleotides with 2',3'-cyclic phosphate intermediates. The sequence is that of Ribonuclease 1 from Panax ginseng (Korean ginseng).